Reading from the N-terminus, the 332-residue chain is Alanine racemase (332 aa).

The Proton acceptor; specific for D-alanine role is filled by Lys33. The residue at position 33 (Lys33) is an N6-(pyridoxal phosphate)lysine. Residue Arg115 participates in substrate binding. The active-site Proton acceptor; specific for L-alanine is the Tyr245. Met286 provides a ligand contact to substrate.

It belongs to the alanine racemase family. Pyridoxal 5'-phosphate serves as cofactor.

It catalyses the reaction L-alanine = D-alanine. It participates in amino-acid biosynthesis; D-alanine biosynthesis; D-alanine from L-alanine: step 1/1. In terms of biological role, catalyzes the interconversion of L-alanine and D-alanine. May also act on other amino acids. The polypeptide is Alanine racemase (alr) (Nitratiruptor sp. (strain SB155-2)).